The sequence spans 65 residues: SPbeta prophage-derived uncharacterized protein YopU (65 aa).

In Bacillus subtilis (strain 168), this protein is SPbeta prophage-derived uncharacterized protein YopU (yopU).